A 203-amino-acid polypeptide reads, in one-letter code: Small ribosomal subunit protein uS7 (203 aa).

The interval 1–22 (MSESEAPEPDQPAGAEEATGAK) is disordered.

Belongs to the universal ribosomal protein uS7 family. As to quaternary structure, part of the 30S ribosomal subunit.

Its function is as follows. One of the primary rRNA binding proteins, it binds directly to 16S rRNA where it nucleates assembly of the head domain of the 30S subunit. Is located at the subunit interface close to the decoding center. The polypeptide is Small ribosomal subunit protein uS7 (Halococcus morrhuae (Micrococcus morrhuae)).